A 391-amino-acid chain; its full sequence is Phosphoglycerate kinase (391 aa).

Residues 21–23, arginine 36, 59–62, arginine 113, and arginine 146 each bind substrate; these read DLN and HLGR. ATP contacts are provided by residues lysine 197, glutamate 319, and 345-348; that span reads GGDT.

Belongs to the phosphoglycerate kinase family. In terms of assembly, monomer.

It localises to the cytoplasm. It carries out the reaction (2R)-3-phosphoglycerate + ATP = (2R)-3-phospho-glyceroyl phosphate + ADP. It participates in carbohydrate degradation; glycolysis; pyruvate from D-glyceraldehyde 3-phosphate: step 2/5. This is Phosphoglycerate kinase from Pseudoalteromonas atlantica (strain T6c / ATCC BAA-1087).